We begin with the raw amino-acid sequence, 305 residues long: Aurasperone B biosynthesis cluster protein A (305 aa).

The N-terminal stretch at 1–26 is a signal peptide; sequence MSIFFSIRFWPAAISAAILWLPQVLG. Residues N29, N34, N64, N83, N132, N183, N218, and N288 are each glycosylated (N-linked (GlcNAc...) asparagine).

This sequence belongs to the bfoA family.

Functionally, part of the gene cluster that mediates the biosynthesis of aurasperone B, a dimeric gamma-naphthopyrone. The first step in the biosynthesis of aurasperone B is the production of gamma-naphthopyrone precursor YWA1 by the non-reducing polyketide synthase albA, via condensation of one acetyl-CoA starter unit with 6 malonyl-CoA units. YWA1 is then methylated by aunE at position C-6 to yield foncesin which is further methylated at position C-8 by aunD to produce fonsecin B. A key enzyme in the biosynthetic pathway is the cytochrome P450 monooxygenase aunB which catalyzes the oxidative dimerization of fonsecin B to aurasperone B. AunB also catalyzes the oxidative dimerization of rubrofusarin B into aurasperone A. The protein is Aurasperone B biosynthesis cluster protein A of Aspergillus niger (strain ATCC MYA-4892 / CBS 513.88 / FGSC A1513).